Here is a 162-residue protein sequence, read N- to C-terminus: NADH-quinone oxidoreductase subunit I 2 (162 aa).

4Fe-4S ferredoxin-type domains lie at 53-83 (LRRY…IESE) and 93-122 (TRYD…ETRI). [4Fe-4S] cluster contacts are provided by cysteine 63, cysteine 66, cysteine 69, cysteine 73, cysteine 102, cysteine 105, cysteine 108, and cysteine 112.

This sequence belongs to the complex I 23 kDa subunit family. As to quaternary structure, NDH-1 is composed of 14 different subunits. Subunits NuoA, H, J, K, L, M, N constitute the membrane sector of the complex. Requires [4Fe-4S] cluster as cofactor.

It is found in the cell inner membrane. The catalysed reaction is a quinone + NADH + 5 H(+)(in) = a quinol + NAD(+) + 4 H(+)(out). In terms of biological role, NDH-1 shuttles electrons from NADH, via FMN and iron-sulfur (Fe-S) centers, to quinones in the respiratory chain. The immediate electron acceptor for the enzyme in this species is believed to be ubiquinone. Couples the redox reaction to proton translocation (for every two electrons transferred, four hydrogen ions are translocated across the cytoplasmic membrane), and thus conserves the redox energy in a proton gradient. In Nitrosospira multiformis (strain ATCC 25196 / NCIMB 11849 / C 71), this protein is NADH-quinone oxidoreductase subunit I 2.